We begin with the raw amino-acid sequence, 578 residues long: 65-kDa microtubule-associated protein 2 (578 aa).

5 coiled-coil regions span residues 64–84, 151–184, 235–257, 290–312, and 461–489; these read AELLQTLSDATVELSNLTTAL, DETDLSLKRLDDFQRKLQELQKEKSDRLQKVLEF, TLKEDKMQRLKKLQELATQLTDL, ALALDLIEQAEVEVDRLDQLKSS, and AMLDEYTMLRQEREDEKRRLKEQKKQQEQ. Residues 473 to 494 show a composition bias toward basic and acidic residues; it reads REDEKRRLKEQKKQQEQPHTDQ. The disordered stretch occupies residues 473 to 578; it reads REDEKRRLKE…SRADPVMASP (106 aa). Phosphoserine is present on residues S503 and S532. The span at 549-558 shows a compositional bias: polar residues; sequence KIASPSNIVA. 3 positions are modified to phosphoserine: S566, S569, and S577.

The protein belongs to the MAP65/ASE1 family. In terms of assembly, forms a dimer. Binds to microtubules (MT). Bundles polymerized MT via the formation of 25-nm crossbridges with centrally located endocytic MT.

The protein resides in the nucleus. The protein localises to the cytoplasm. It localises to the cytoskeleton. It is found in the spindle pole. Its subcellular location is the phragmoplast. Its function is as follows. Microtubule-associated protein that stabilize microtubules (MT). Involved in the regulation of MT organization and dynamics. Confers MT resistance to the drug propyzamide and cold conditions. The chain is 65-kDa microtubule-associated protein 2 (MAP65-2) from Arabidopsis thaliana (Mouse-ear cress).